Consider the following 411-residue polypeptide: Carbohydrate sulfotransferase 1 (411 aa).

Topologically, residues 1–2 (MQ) are cytoplasmic. Residues 3-23 (CSWKAVLLLALASIAIQYTAI) traverse the membrane as a helical; Signal-anchor for type II membrane protein segment. Residues 24–411 (RTFTAKSFHT…VEERDFRPFL (388 aa)) lie on the Lumenal side of the membrane. A glycan (N-linked (GlcNAc...) asparagine) is linked at asparagine 56. A 3'-phosphoadenylyl sulfate-binding site is contributed by 69–75 (TRSGSSF). Residues asparagine 145 and asparagine 189 are each glycosylated (N-linked (GlcNAc...) asparagine). 234 to 242 (RDPRGILAS) contributes to the 3'-phosphoadenylyl sulfate binding site. A glycan (N-linked (GlcNAc...) asparagine) is linked at asparagine 334. Residues 337-339 (RGD) carry the Cell attachment site motif.

This sequence belongs to the sulfotransferase 1 family. Gal/GlcNAc/GalNAc subfamily. Broadly expressed with highest levels in central nervous system. Expressed in cortex (at protein level). Expressed in high endothelial venules in peripheral lymph nodes, mesenteric lymph nodes and Peyer's patches.

It is found in the golgi apparatus membrane. It catalyses the reaction 3'-phosphoadenylyl sulfate + keratan = adenosine 3',5'-bisphosphate + keratan 6'-sulfate.. It participates in glycan metabolism. In terms of biological role, sulfotransferase that utilizes 3'-phospho-5'-adenylyl sulfate (PAPS) as sulfonate donor to catalyze the transfer of sulfate to position 6 of internal galactose (Gal) residues of keratan. Cooperates with B4GALT4 and B3GNT7 glycosyltransferases and CHST6 sulfotransferase to construct and elongate disulfated disaccharide unit [-&gt;3(6-sulfoGalbeta)1-&gt;4(6-sulfoGlcNAcbeta)1-&gt;] within keratan sulfate polymer. Has a preference for sulfating keratan sulfate, but it also transfers sulfate to the unsulfated polymer. Involved in biosynthesis of phosphacan, a major keratan sulfate proteoglycan in the developing brain. Involved in biosynthesis of 6-sulfoGalbeta-containing O-linked glycans in high endothelial venules of lymph nodes. May act in a synergistic manner with CHST4 to generate sialyl 6',6-disulfo Lewis X motif, a recognition determinant for immune cell receptors implicated in leukocyte trafficking. Catalyzes sulfation of N-acetyllactosamine (LacNAc) oligosaccharides with highest efficiency for sialylated LacNAc structures. This is Carbohydrate sulfotransferase 1 (Chst1) from Mus musculus (Mouse).